The chain runs to 1043 residues: MAQESSNMDQSKSDNVTDNKPNRSLISMARPSPQRCHPLDQQSASTSSLPTSRPSSSPGQSPNITPSILTSDTLHLPARSVSPTRPWTPSRGSEWSRHMPLSVSSVNYEPPEINCSPRPGTPSSKYGGSPRRPLRQPVVCWPPASSAGETSIDIADGGDDSEDPFVVGERTVHQRSNTRSSIKLIQFTMQLSPQLLQMKRTPWVKLTLDDGEDDESDFNVHYGPAPTGRQERRGVRKAQMTKKEVRLMNGELVLECKIPRMLHSFLPRRDDREFTHMRYTAVTCDPDDFTVKGFKLRQNIGSTMRETELFVCVTMYNENEIDFTRTMHGIMRNISHFCSRTKSRTWGKDGWQKIVVCIIADGRQKVHPRTLNALAAMGVYQDGIAKNVVNQKPVNAHVYEYTTQVSLDPDLKFKGAEKGIMPCQVIFCMKERNEKKLNSHRWFFNAFGRALNPNICILLDVGTKPEPTALYHLWKAFDQDSNVAGAAGEIKAGKGKGCLGLFNPLVASQNFEYKMSNILDKPLESVFGYITVLPGALSAYRYHALQNDSTGHGPLSMYFKGEMLHGKNADVFTANMYLAEDRILCWELVAKREEQWVLKFVKSAVGETDVPDTVPEFISQRRRWLNGAFFAAVYSLIHFRQIWRTDHTITRKILLHIEFLYQFVSLAFTFFSLANFYLTFYFIAGALSDPTVDPFGHNIGKYIFAILRYTCVLLICLQFVLSMGNRPQGAKKMFLSGMIIYCIIMMYTVFSALYMVVMQLKTSKEMIKDSLSLGNNTFTYIIVSTLSTVGLYFFMSFLYLDPWHMFTSSIQYFALLPSYICRLQIYAFCNTHDVTWGTKGDNVIRTDLGTARITSSSTVELEMPSEQLDIDSGYDESSAISATDSKCPRQSHPRRRCRKTTTAVRTYMVSVWFIANAILAMAVSEAFTEKSVGNNAYLAFVLWSVASLAVFRAVGSTAFAILNVVHRVMEGKMKFAAAGGTGYGYGSYVGSSSGGGGGSSGVRSSGAGSSLGLSSGMGEKVSDWASETGWAVKRTAGKLRFWR.

Positions 1–10 (MAQESSNMDQ) are enriched in polar residues. Disordered stretches follow at residues 1-133 (MAQE…PRRP) and 215-234 (ESDFNVHYGPAPTGRQERRG). Residues 11–21 (SKSDNVTDNKP) show a composition bias toward basic and acidic residues. The segment covering 43 to 58 (SASTSSLPTSRPSSSP) has biased composition (low complexity). 2 stretches are compositionally biased toward polar residues: residues 59 to 73 (GQSPNITPSILTSDT) and 81 to 93 (VSPTRPWTPSRGS). Helical transmembrane passes span 663-683 (FVSLAFTFFSLANFYLTFYFI), 703-723 (IFAILRYTCVLLICLQFVLSM), 738-758 (MIIYCIIMMYTVFSALYMVVM), 780-800 (YIIVSTLSTVGLYFFMSFLYL), 907-927 (YMVSVWFIANAILAMAVSEAF), and 931-951 (SVGNNAYLAFVLWSVASLAVF).

It belongs to the chitin synthase family. Class II subfamily.

The protein localises to the cell membrane. The enzyme catalyses [(1-&gt;4)-N-acetyl-beta-D-glucosaminyl](n) + UDP-N-acetyl-alpha-D-glucosamine = [(1-&gt;4)-N-acetyl-beta-D-glucosaminyl](n+1) + UDP + H(+). Its function is as follows. Polymerizes chitin, a structural polymer of the cell wall and septum, by transferring the sugar moiety of UDP-GlcNAc to the non-reducing end of the growing chitin polymer. The protein is Chitin synthase 2 (CHS2) of Paracoccidioides brasiliensis.